A 791-amino-acid polypeptide reads, in one-letter code: Probable phosphoketolase (791 aa).

It belongs to the XFP family. Thiamine diphosphate serves as cofactor.

The chain is Probable phosphoketolase from Chlorobaculum tepidum (strain ATCC 49652 / DSM 12025 / NBRC 103806 / TLS) (Chlorobium tepidum).